The following is a 360-amino-acid chain: Dual-specificity RNA methyltransferase RlmN (360 aa).

Glu91 (proton acceptor) is an active-site residue. Residues 110–343 form the Radical SAM core domain; the sequence is RSEKYTVCIS…CTIRESKGLD (234 aa). Cys117 and Cys348 are disulfide-bonded. Positions 124, 128, and 131 each coordinate [4Fe-4S] cluster. Residues 174-175, Ser206, 229-231, and Asn305 contribute to the S-adenosyl-L-methionine site; these read GE and SLH. The S-methylcysteine intermediate role is filled by Cys348.

Belongs to the radical SAM superfamily. RlmN family. [4Fe-4S] cluster serves as cofactor.

Its subcellular location is the cytoplasm. It carries out the reaction adenosine(2503) in 23S rRNA + 2 reduced [2Fe-2S]-[ferredoxin] + 2 S-adenosyl-L-methionine = 2-methyladenosine(2503) in 23S rRNA + 5'-deoxyadenosine + L-methionine + 2 oxidized [2Fe-2S]-[ferredoxin] + S-adenosyl-L-homocysteine. The enzyme catalyses adenosine(37) in tRNA + 2 reduced [2Fe-2S]-[ferredoxin] + 2 S-adenosyl-L-methionine = 2-methyladenosine(37) in tRNA + 5'-deoxyadenosine + L-methionine + 2 oxidized [2Fe-2S]-[ferredoxin] + S-adenosyl-L-homocysteine. Its function is as follows. Specifically methylates position 2 of adenine 2503 in 23S rRNA and position 2 of adenine 37 in tRNAs. m2A2503 modification seems to play a crucial role in the proofreading step occurring at the peptidyl transferase center and thus would serve to optimize ribosomal fidelity. This is Dual-specificity RNA methyltransferase RlmN from Aliarcobacter butzleri (strain RM4018) (Arcobacter butzleri).